The sequence spans 161 residues: AP-1 complex subunit sigma-1 (161 aa).

Belongs to the adaptor complexes small subunit family. Adaptor protein complex 1 (AP-1) is a heterotetramer composed of two large adaptins (gamma-type subunit and beta-type subunit), a medium adaptin (mu-type subunit) and a small adaptin (sigma-type subunit). As to expression, expressed in seedlings, roots, stems, leaves, flowers and siliques (developing fruits and seeds).

It localises to the golgi apparatus. It is found in the cytoplasmic vesicle. Its subcellular location is the clathrin-coated vesicle membrane. Functionally, subunit of clathrin-associated adaptor protein complex 1 that plays a role in protein sorting at the trans-Golgi network and early endosomes (TGN/EE). The AP complexes mediate the recruitment of clathrin to membranes and the recognition of sorting signals within the cytosolic tails of transmembrane cargo molecules. This chain is AP-1 complex subunit sigma-1 (AAP19-1), found in Arabidopsis thaliana (Mouse-ear cress).